We begin with the raw amino-acid sequence, 188 residues long: Pyridoxal 5'-phosphate synthase subunit PdxT (188 aa).

46–48 is an L-glutamine binding site; sequence GES. The Nucleophile role is filled by C78. L-glutamine-binding positions include R105 and 134–135; that span reads IR. Active-site charge relay system residues include H170 and E172.

It belongs to the glutaminase PdxT/SNO family. As to quaternary structure, in the presence of PdxS, forms a dodecamer of heterodimers. Only shows activity in the heterodimer.

It carries out the reaction aldehydo-D-ribose 5-phosphate + D-glyceraldehyde 3-phosphate + L-glutamine = pyridoxal 5'-phosphate + L-glutamate + phosphate + 3 H2O + H(+). The catalysed reaction is L-glutamine + H2O = L-glutamate + NH4(+). The protein operates within cofactor biosynthesis; pyridoxal 5'-phosphate biosynthesis. Catalyzes the hydrolysis of glutamine to glutamate and ammonia as part of the biosynthesis of pyridoxal 5'-phosphate. The resulting ammonia molecule is channeled to the active site of PdxS. The polypeptide is Pyridoxal 5'-phosphate synthase subunit PdxT (Thermotoga neapolitana (strain ATCC 49049 / DSM 4359 / NBRC 107923 / NS-E)).